The sequence spans 106 residues: MPFLDIQKRFGLNIDRWLTIQSAEQPYKMAGRCHAFEKEWIECAHGIGYTRAEKECKIEYDDFVECLLRQKTMRRAGTIRKQRDKLIKEGKYTPPPHHIGKGEPRP.

One can recognise a CHCH domain in the interval 30-74 (AGRCHAFEKEWIECAHGIGYTRAEKECKIEYDDFVECLLRQKTMR). 2 consecutive short sequence motifs (cx9C motif) follow at residues 33–43 (CHAFEKEWIEC) and 56–66 (CKIEYDDFVEC). Intrachain disulfides connect C33-C66 and C43-C56. The disordered stretch occupies residues 84 to 106 (DKLIKEGKYTPPPHHIGKGEPRP).

The protein belongs to the complex I NDUFS5 subunit family. As to quaternary structure, mammalian complex I is composed of 45 different subunits. This is a component of the iron-sulfur (IP) fragment of the enzyme.

Its subcellular location is the mitochondrion inner membrane. It is found in the mitochondrion intermembrane space. In terms of biological role, accessory subunit of the mitochondrial membrane respiratory chain NADH dehydrogenase (Complex I), that is believed not to be involved in catalysis. Complex I functions in the transfer of electrons from NADH to the respiratory chain. The immediate electron acceptor for the enzyme is believed to be ubiquinone. The polypeptide is NADH dehydrogenase [ubiquinone] iron-sulfur protein 5 (NDUFS5) (Gorilla gorilla gorilla (Western lowland gorilla)).